Here is a 22-residue protein sequence, read N- to C-terminus: Cysteine protease inhibitor 4 (22 aa).

The protein belongs to the protease inhibitor I3 (leguminous Kunitz-type inhibitor) family. In terms of tissue distribution, tubers.

It is found in the vacuole. Its function is as follows. Inhibitor of papain (cysteine protease). Does not inhibit trypsin, chymotrypsin nor elastase (serine proteases). May protect the plant by inhibiting proteases of invading organisms. This is Cysteine protease inhibitor 4 from Solanum tuberosum (Potato).